We begin with the raw amino-acid sequence, 206 residues long: MARLAGVAALSLVLVLLGAGVPRPAAAAAAKTQVFLSKLPKALVVGVSPKHGEVVHAGENTVTVTWSLNTSEPAGADAAFKSVKVKLCYAPASRTDRGWRKASDDLHKDKACQFKVTVQPYAAGAGRFDYVVARDIPTASYFVRAYAVDASGTEVAYGQSSPDAAFDVAGITGIHASLKVAAGVFSTFSIAALAFFFVVEKRKKDK.

An N-terminal signal peptide occupies residues 1–27 (MARLAGVAALSLVLVLLGAGVPRPAAA). A helical transmembrane segment spans residues 180–200 (VAAGVFSTFSIAALAFFFVVE).

Belongs to the NAR2 family. As to quaternary structure, heterotetramer composed of two NRT2.1, NRT2.2 or NRT2.3 and two NAR2.1. Interacts with NRT2.1, NRT2.2 and isoform 1 of NRT2.3. Expressed in epidermal cells of primary and lateral roots, root-shoot junction zone, vascular tissues of adventitious root primordia, stems and coleoptiles of germinating seeds.

It localises to the cell membrane. In terms of biological role, acts as a dual component transporter with NTR2.1, NRT2.2 and NRT2.3. Required for high-affinity nitrate transport. Involved in the regulation of NRT2.1, NRT2.2 and NRT2.3 expression, and in both, HATS (high-affinity transport system) and LATS (low-affinity transport system) activities in plant roots. Imports nitrate with high affinity when expressed with NTR2.1, NTR2.2 or NTR2.3 in a heterologous system (Xenopus oocytes). The polypeptide is High-affinity nitrate transporter-activating protein 2.1 (NAR2.1) (Oryza sativa subsp. japonica (Rice)).